The sequence spans 125 residues: Small ribosomal subunit protein uS12 (125 aa).

The tract at residues 1 to 30 (MPTISQLVRKPRAAKPLKSKVPALGNSPQK) is disordered. Over residues 9–18 (RKPRAAKPLK) the composition is skewed to basic residues. The residue at position 89 (D89) is a 3-methylthioaspartic acid. Residues 103–125 (DTAGVKDRKQGRSKYGAKKPKSA) are disordered. Positions 113-125 (GRSKYGAKKPKSA) are enriched in basic residues.

It belongs to the universal ribosomal protein uS12 family. Part of the 30S ribosomal subunit. Contacts proteins S8 and S17. May interact with IF1 in the 30S initiation complex.

With S4 and S5 plays an important role in translational accuracy. Functionally, interacts with and stabilizes bases of the 16S rRNA that are involved in tRNA selection in the A site and with the mRNA backbone. Located at the interface of the 30S and 50S subunits, it traverses the body of the 30S subunit contacting proteins on the other side and probably holding the rRNA structure together. The combined cluster of proteins S8, S12 and S17 appears to hold together the shoulder and platform of the 30S subunit. The chain is Small ribosomal subunit protein uS12 from Nitrosospira multiformis (strain ATCC 25196 / NCIMB 11849 / C 71).